The sequence spans 79 residues: Sperm-specific basic nuclear protein SP4 (79 aa).

Positions 1-79 (MSKVSGGSRR…ARDYGSDYRS (79 aa)) are disordered. Residues 9 to 60 (RRTRARRPMSNRRGRRSQSAAHRSRAQRRRRRTGTTRRARTSTARRARTRTA) show a composition bias toward basic residues. 2 repeats span residues 45–52 (RRARTSTA) and 53–60 (RRARTRTA). Residues 61-79 (RRSDLTRMMARDYGSDYRS) show a composition bias toward basic and acidic residues.

The protein resides in the nucleus. The polypeptide is Sperm-specific basic nuclear protein SP4 (sp4-a) (Xenopus laevis (African clawed frog)).